The following is a 429-amino-acid chain: Carbamoyl phosphate synthase arginine-specific small chain (429 aa).

The transit peptide at 1 to 20 (MIRVIQPPLIASKQLFRRYL) directs the protein to the mitochondrion. A Glutamine amidotransferase type-1 domain is found at 218–406 (HIAVLDCGAK…FENIEQYRAT (189 aa)). Cys295 serves as the catalytic Nucleophile. Residues His379 and Glu381 contribute to the active site.

This sequence belongs to the CarA family. Heterodimer composed of 2 chains; the small (or glutamine) chain promotes the hydrolysis of glutamine to ammonia, which is used by the large (or ammonia) chain to synthesize carbamoyl phosphate.

It localises to the mitochondrion matrix. It carries out the reaction hydrogencarbonate + L-glutamine + 2 ATP + H2O = carbamoyl phosphate + L-glutamate + 2 ADP + phosphate + 2 H(+). The catalysed reaction is L-glutamine + H2O = L-glutamate + NH4(+). The protein operates within amino-acid biosynthesis; L-arginine biosynthesis; carbamoyl phosphate from bicarbonate: step 1/1. Its function is as follows. Small subunit of the arginine-specific carbamoyl phosphate synthase (CPSase). CPSase catalyzes the formation of carbamoyl phosphate from the ammonia moiety of glutamine, carbonate, and phosphate donated by ATP, the first step of the arginine biosynthetic pathway. The small subunit (glutamine amidotransferase) binds and cleaves glutamine to supply the large subunit with the substrate ammonia. The polypeptide is Carbamoyl phosphate synthase arginine-specific small chain (CPA1) (Debaryomyces hansenii (strain ATCC 36239 / CBS 767 / BCRC 21394 / JCM 1990 / NBRC 0083 / IGC 2968) (Yeast)).